Reading from the N-terminus, the 447-residue chain is UDP-N-acetylmuramate--L-alanine ligase (447 aa).

108–114 (GSHGKTS) contributes to the ATP binding site.

It belongs to the MurCDEF family.

It is found in the cytoplasm. It catalyses the reaction UDP-N-acetyl-alpha-D-muramate + L-alanine + ATP = UDP-N-acetyl-alpha-D-muramoyl-L-alanine + ADP + phosphate + H(+). It participates in cell wall biogenesis; peptidoglycan biosynthesis. Cell wall formation. This chain is UDP-N-acetylmuramate--L-alanine ligase, found in Listeria welshimeri serovar 6b (strain ATCC 35897 / DSM 20650 / CCUG 15529 / CIP 8149 / NCTC 11857 / SLCC 5334 / V8).